Here is a 329-residue protein sequence, read N- to C-terminus: MPILFDCNATAIQVLRDEASALLESVKQFQEPNDLEAIVKLILKSQEKGGKLVIVGVGKSALVAQKIVASMLSTGNRSAFLHPTEAMHGDLGMVEKNDVILMISYGGESLELLNLVSHLKRLSHKIITFTKSPTSSLSKLGDYYLSLKIKKEACPINTAPTTSTTLTLALGDVLMACLMRAKNFSQEDFASFHPGGLLGKKLFVKVKDLLQTTNLPLIAPSTSFKDALIEMSEKRLGSAILVNDNNELVGVLSDGDVRRALLKGLSLESEVKHFATLKPKSFKNLDALLLEALEFLERHKIQLLVCVDDRNKVLGVLHLHQLLELGLKA.

The 147-residue stretch at 38-184 folds into the SIS domain; that stretch reads IVKLILKSQE…MACLMRAKNF (147 aa). 56–61 is an ATP binding site; the sequence is GVGKSA. 2 consecutive CBS domains span residues 211 to 267 and 276 to 329; these read QTTN…GLSL and TLKP…GLKA.

The protein belongs to the SIS family. GutQ/KpsF subfamily.

This is an uncharacterized protein from Helicobacter pylori (strain J99 / ATCC 700824) (Campylobacter pylori J99).